Reading from the N-terminus, the 625-residue chain is MMNESLTEKRNELSLSFAALGVVFGDIGTSPLYAFGQVIKYFPINDHNIYGILSLIFWSLIIIVSIKYLVIVFRADNDGEGGIIALAGVIRQKIKQPGGWLLFITLVGIGLIIGDGMLTPAISILSAVEGLESLSPNLAKYVLPVTLIILFFLFKMQSIGTGKIGVYFAPVMLVWFITIGILGFLQIIQNPKVLMAINPYYAINFFMIHKYLALFILGGVFLVMTGGEALFADLGHFGKKAIRTGWFAVALPALLLCYFGQGALVLMHTEDIKYPFFSLSPDWFLPVMIILATLATIIASQAIISAAFSILKQASLLNLIPRLKIVFTSKFEKGEVYLPLINFILALGTCSLVVIFKSSSNLADAYGIAVNLDMLITTVLVGIIAYRCWSWHAFKILIFLLILIIELAFFAGNIPKLLTGGWIPILIAFLGFVVMYTWHCGFEKLRELHHRDALMDAFIIDELNQNKISRQPGMGLYIIDPYDCEGESLLHHLRLNRIFFENMVFVSIKIENKPYIPIEDKFELIKKAEGFYLIFIHYGFTENINLPNELDEMFKRVYLPFDVIKNKLIYFIEIVFVEMTGERQKHMYLWQKHFFSLMIRNAVPDIQFYQLPYNNTIAIGTYYQF.

A run of 12 helical transmembrane segments spans residues 15-35 (LSFA…LYAF), 52-72 (ILSL…LVIV), 98-118 (GGWL…DGML), 134-154 (LSPN…FFLF), 164-184 (IGVY…ILGF), 212-232 (LALF…ALFA), 246-266 (WFAV…ALVL), 284-304 (FLPV…QAII), 336-356 (VYLP…VVIF), 365-385 (AYGI…GIIA), 394-414 (FKIL…AGNI), and 417-437 (LLTG…VMYT).

This sequence belongs to the HAK/KUP transporter (TC 2.A.72) family.

It localises to the cell inner membrane. It catalyses the reaction K(+)(in) + H(+)(in) = K(+)(out) + H(+)(out). Transport of potassium into the cell. Likely operates as a K(+):H(+) symporter. The protein is Probable potassium transport system protein Kup 2 of Legionella pneumophila (strain Corby).